Here is a 246-residue protein sequence, read N- to C-terminus: Bis(5'-nucleosyl)-tetraphosphatase PrpE [asymmetrical] (246 aa).

The protein belongs to the PrpE family. Requires Ni(2+) as cofactor.

The catalysed reaction is P(1),P(4)-bis(5'-guanosyl) tetraphosphate + H2O = GMP + GTP + 2 H(+). Its function is as follows. Asymmetrically hydrolyzes Ap4p to yield AMP and ATP. The chain is Bis(5'-nucleosyl)-tetraphosphatase PrpE [asymmetrical] from Bacillus thuringiensis (strain Al Hakam).